A 482-amino-acid chain; its full sequence is Ribosomal RNA small subunit methyltransferase F (482 aa).

S-adenosyl-L-methionine contacts are provided by residues 119 to 125 (ASAPGSK), Glu-143, Asp-170, and Asp-188. Cys-241 acts as the Nucleophile in catalysis.

It belongs to the class I-like SAM-binding methyltransferase superfamily. RsmB/NOP family.

It is found in the cytoplasm. It carries out the reaction cytidine(1407) in 16S rRNA + S-adenosyl-L-methionine = 5-methylcytidine(1407) in 16S rRNA + S-adenosyl-L-homocysteine + H(+). In terms of biological role, specifically methylates the cytosine at position 1407 (m5C1407) of 16S rRNA. The polypeptide is Ribosomal RNA small subunit methyltransferase F (Shewanella sp. (strain MR-7)).